Consider the following 608-residue polypeptide: Glutamine--fructose-6-phosphate aminotransferase [isomerizing] (608 aa).

Cys-2 functions as the Nucleophile; for GATase activity in the catalytic mechanism. The Glutamine amidotransferase type-2 domain maps to Cys-2–Thr-217. 2 SIS domains span residues Ile-281–Thr-422 and Leu-456–Pro-598. Lys-603 serves as the catalytic For Fru-6P isomerization activity.

It is found in the cytoplasm. It catalyses the reaction D-fructose 6-phosphate + L-glutamine = D-glucosamine 6-phosphate + L-glutamate. Its function is as follows. Involved in the production of the root hair deformation (HAD) factor specifically on medicago. This is Glutamine--fructose-6-phosphate aminotransferase [isomerizing] (nodM) from Rhizobium meliloti (strain 1021) (Ensifer meliloti).